The chain runs to 331 residues: MIVSRQVIRSVVRKSFNRLCSANVVALPSGSTKEALKELRRKTGYSYVNCRKALNEFGPDNLDEAIKWLKKRAIEEGWEKAAKLGDRPTRQGIVSVMTKGNKAAIVELNCETDFVSRNEDFKRLVEDVTKAVLHAADRDGTSTHGFELLNSNINSLKTSENGMLVKDLITEAIGRLGENITLSRAQLILAPPNVQLFGYAHPKEGTDRVYMGRYVSVVGLKGSNKTDFPTEKLGFQLCQHVVGMRSLTLGTPLPVKKTSVKDEVSQDDEINAFYNGEVTHIDENETQLLRQSFMLNPSQTVHEYVTGHGASIVDFYRTELSSNVSEESFQS.

The N-terminal 14 residues, 1–14, are a transit peptide targeting the mitochondrion; the sequence is MIVSRQVIRSVVRK.

Belongs to the EF-Ts family.

It is found in the mitochondrion. Associates with the EF-Tu.GDP complex and induces the exchange of GDP to GTP. It remains bound to the aminoacyl-tRNA.EF-Tu.GTP complex up to the GTP hydrolysis stage on the ribosome. This is Elongation factor Ts, mitochondrial from Brugia malayi (Filarial nematode worm).